The following is a 107-amino-acid chain: UPF0145 protein Sfri_2095 (107 aa).

This sequence belongs to the UPF0145 family.

In Shewanella frigidimarina (strain NCIMB 400), this protein is UPF0145 protein Sfri_2095.